The following is a 623-amino-acid chain: Chaperone protein HtpG (623 aa).

The a; substrate-binding stretch occupies residues 1–341 (MEKREFKAES…SQDLSLNISR (341 aa)). The interval 342-549 (EMLQHDRQLS…EGEVSIEMEK (208 aa)) is b. The interval 550 to 623 (ILSAMPNNQG…FTNDICKLMK (74 aa)) is c.

This sequence belongs to the heat shock protein 90 family. Homodimer.

Its subcellular location is the cytoplasm. In terms of biological role, molecular chaperone. Has ATPase activity. The chain is Chaperone protein HtpG from Clostridium perfringens (strain 13 / Type A).